The primary structure comprises 267 residues: Phosphate import ATP-binding protein PstB (267 aa).

Residues 21–262 (VAARNLDFYY…PSKQQTEDYI (242 aa)) form the ABC transporter domain. 53–60 (GPSGCGKS) lines the ATP pocket.

It belongs to the ABC transporter superfamily. Phosphate importer (TC 3.A.1.7) family. As to quaternary structure, the complex is composed of two ATP-binding proteins (PstB), two transmembrane proteins (PstC and PstA) and a solute-binding protein (PstS).

It is found in the cell inner membrane. The catalysed reaction is phosphate(out) + ATP + H2O = ADP + 2 phosphate(in) + H(+). Its function is as follows. Part of the ABC transporter complex PstSACB involved in phosphate import. Responsible for energy coupling to the transport system. The polypeptide is Phosphate import ATP-binding protein PstB (Xanthomonas campestris pv. campestris (strain 8004)).